Here is a 102-residue protein sequence, read N- to C-terminus: NADH-quinone oxidoreductase subunit K (102 aa).

3 helical membrane passes run 6 to 26, 30 to 50, and 62 to 82; these read LEHG…GLMV, ILFV…AFIV, and VMFI…LAIL.

It belongs to the complex I subunit 4L family. In terms of assembly, NDH-1 is composed of 13 different subunits. Subunits NuoA, H, J, K, L, M, N constitute the membrane sector of the complex.

The protein resides in the cell inner membrane. It catalyses the reaction a quinone + NADH + 5 H(+)(in) = a quinol + NAD(+) + 4 H(+)(out). Functionally, NDH-1 shuttles electrons from NADH, via FMN and iron-sulfur (Fe-S) centers, to quinones in the respiratory chain. The immediate electron acceptor for the enzyme in this species is believed to be ubiquinone. Couples the redox reaction to proton translocation (for every two electrons transferred, four hydrogen ions are translocated across the cytoplasmic membrane), and thus conserves the redox energy in a proton gradient. In Pseudomonas putida (strain W619), this protein is NADH-quinone oxidoreductase subunit K.